The sequence spans 394 residues: 4-hydroxyphenylpyruvate dioxygenase (394 aa).

2 consecutive VOC domains span residues Ser-18–Tyr-149 and Phe-181–Lys-339. Fe cation contacts are provided by His-184, His-267, and Glu-350.

It belongs to the 4HPPD family. As to quaternary structure, homodimer. Fe cation is required as a cofactor.

The protein localises to the cytoplasm. It is found in the endoplasmic reticulum membrane. The protein resides in the golgi apparatus membrane. It catalyses the reaction 3-(4-hydroxyphenyl)pyruvate + O2 = homogentisate + CO2. It functions in the pathway amino-acid degradation; L-phenylalanine degradation; acetoacetate and fumarate from L-phenylalanine: step 3/6. Functionally, catalyzes the conversion of 4-hydroxyphenylpyruvic acid to homogentisic acid, one of the steps in tyrosine catabolism. The sequence is that of 4-hydroxyphenylpyruvate dioxygenase (hpd) from Xenopus tropicalis (Western clawed frog).